We begin with the raw amino-acid sequence, 434 residues long: MLSLTATTLSSSIFTQSKTHGFFNTRPVYRKPFTTITSALIPASNRQAPPKQQLYQPFRPPPSPIPPKFRSLDTAGKIEVLADRLGLWFEYAPLISSLYTEGFTPPSIEELTGISGVEQNSLIVGAQVRDSLVQSGAKPELIAAFDTNGAELLYEIRLLNTTQRVAAAEYIVDHGFDTKGAGDLARAIKDFPHRRGDVGLGDFDYNLPGDCLSFMLYRKSREHRSPSEIRTTLLEQALETAVTEKAKKAVLRELHGESEEERVKEEEIKIIRVPVVRLRFGEVAGASSVVVLPVCKAEEGEEKLLEAPMEFESGGEFGVVEAEKDWSRWVVLPGWDPVVAVRKGVAVSFSDDREVLPWNGKGEAIMVVIDREKKTVEADNGYYYLVVADGGMKLDRGLVLKEKGVNESLGMVVLVVRPPRDDDDEWQINDEDWD.

The transit peptide at 1 to 51 (MLSLTATTLSSSIFTQSKTHGFFNTRPVYRKPFTTITSALIPASNRQAPPK) directs the protein to the chloroplast. The N-terminal alpha-helix stretch occupies residues 65–254 (IPPKFRSLDT…KAKKAVLREL (190 aa)). The interval 273–419 (VPVVRLRFGE…GMVVLVVRPP (147 aa)) is C-terminal beta sheet.

It belongs to the RAF family. Homodimer.

Its subcellular location is the plastid. It localises to the chloroplast. In terms of biological role, required for assembly or stability of RuBisCO. Acts at a postchaperonin step to fold and/or assemble the large subunit (rbcL) into RuBisCO. RAF1 binds first to a rbcL dimer (rbcL(2)), leading to a rbcL(8)-RAF1(4) complex formation. In the next step, RBCS displaces RAF1, thus resulting in holoenzyme formation. The chain is Rubisco accumulation factor 1.1, chloroplastic from Arabidopsis thaliana (Mouse-ear cress).